The following is a 258-amino-acid chain: UPF0246 protein YaaA (258 aa).

The protein belongs to the UPF0246 family.

This chain is UPF0246 protein YaaA, found in Escherichia coli O45:K1 (strain S88 / ExPEC).